We begin with the raw amino-acid sequence, 115 residues long: Large ribosomal subunit protein bL31B (115 aa).

The protein belongs to the bacterial ribosomal protein bL31 family. Type B subfamily. As to quaternary structure, part of the 50S ribosomal subunit.

The polypeptide is Large ribosomal subunit protein bL31B (Polynucleobacter asymbioticus (strain DSM 18221 / CIP 109841 / QLW-P1DMWA-1) (Polynucleobacter necessarius subsp. asymbioticus)).